We begin with the raw amino-acid sequence, 914 residues long: MRRLLLLLPLVVVAARMQIEWLWFNQFNLANVLLERWLLQVLLAGVAMLPLLAARAWSRQFRQQRLTSSQGISLRGWPYGIALLICAVVVLISALLTLDLLALAISDPFQLGDWQSNVWPHSRIGSVVKLVQVGGIGLAMTWLRLRPWLGRIVAASWVVVVSRTWGIWSLALWIPNESTKDPLLGADLSFGLGRFAGLHLALDLLLLGATFTLVFELWRVLASSQAISDWASPAFSPRQMRLIRLLSALLLFGAAGLVWLSRHQLLWTQHGLVAGAGWLQAHMTLPLRGFATLLLLLMGLALLLPCQRRLRQFLALALATLVMLETLATPLTRWLVVRPREFALQERYLKNAIEATQWGFQLDQIKSQVDDPSRFSPTDREEGASTLENVRIWDSGPLLEANRQLQQLRVYYRFSNAAVDRYPLNQDSDSSQQVIVSARELDQSALPRRSKTWQNRHFIFTHGYGFTVSPVNERRDDGLPSYFIKGLGTETKIAGNPALGIERSEVEKEIPVGDAALYYGMLPSPYAVAPTDIAEFDYPEGDINVMTHYQGSGGVPIGTWLQRCSAAVYLREPRLLFTNAINADSKLLIRRDVRSRVKAIAPFIDFRGEPYLISIPDAQQGSSNRINQNSNQRQQHQYWVVEGYTHSSTLAYSAAVSPDDSDRYLRNSVKAIVDAYNGSIRFFVSEPEDPIVNAWIRGFPDLFEPMQAMPLLVRDHRRVPEDFFNVQVNQLKRYHVDDPQIFYNGDDVWQVPSEIYGGQKINVEPYHITAQVQGNNNSEFLLLQPLTPLARPNLTAWLVARNDGDHYGELELIDFPKDKIILGPEQVQALIHQDPDVSEQFGLWDQDDLELVQGNLLVLPVGSGLLYVEPVYLRTRKVGLPSLARIVVSDGRLVAMDQDLNLALDQLMKKAPPV.

The next 9 helical transmembrane spans lie at 4-24 (LLLL…WLWF), 37-57 (WLLQ…ARAW), 81-101 (IALL…LDLL), 123-143 (RIGS…MTWL), 152-172 (IVAA…SLAL), 195-215 (FAGL…TLVF), 240-260 (MRLI…LVWL), 285-305 (LPLR…LLLP), and 312-332 (QFLA…TPLT).

The protein belongs to the UPF0182 family.

Its subcellular location is the cell membrane. The chain is UPF0182 protein Syncc9605_1323 from Synechococcus sp. (strain CC9605).